The chain runs to 89 residues: DNA-directed RNA polymerase subunit omega (89 aa).

This sequence belongs to the RNA polymerase subunit omega family. As to quaternary structure, the RNAP catalytic core consists of 2 alpha, 1 beta, 1 beta' and 1 omega subunit. When a sigma factor is associated with the core the holoenzyme is formed, which can initiate transcription.

It catalyses the reaction RNA(n) + a ribonucleoside 5'-triphosphate = RNA(n+1) + diphosphate. Promotes RNA polymerase assembly. Latches the N- and C-terminal regions of the beta' subunit thereby facilitating its interaction with the beta and alpha subunits. The protein is DNA-directed RNA polymerase subunit omega of Clavibacter michiganensis subsp. michiganensis (strain NCPPB 382).